The chain runs to 98 residues: Cystatin-B (98 aa).

At Met1 the chain carries N-acetylmethionine. The Secondary area of contact motif lies at 46–50 (QVVAG).

It belongs to the cystatin family. In terms of assembly, able to form dimers stabilized by noncovalent forces.

The protein resides in the cytoplasm. It localises to the nucleus. In terms of biological role, this is an intracellular thiol proteinase inhibitor. Tightly binding reversible inhibitor of cathepsins L, H and B. The protein is Cystatin-B (CSTB) of Macaca fuscata fuscata (Japanese macaque).